The sequence spans 616 residues: Cleavage stimulation factor subunit 2 tau variant (616 aa).

The RRM domain occupies 16-94 (RSVFVGNIPY…RALRVDNAAS (79 aa)). Disordered stretches follow at residues 203 to 241 (GKSQ…QPQH) and 262 to 418 (IPAP…SRAM). Composition is skewed to low complexity over residues 223-233 (PGPNVLLNQQN) and 319-331 (VTPG…GLLG). Residue threonine 320 is modified to Phosphothreonine. The segment covering 368-381 (SGHDTRGPSSHEMR) has biased composition (basic and acidic residues). A 1-1 repeat occupies 418–422 (METRA). Residues 418 to 462 (METRAMETEVLETRVMERRGMETCAMETRGMEARGMDARGLEMRG) form a 9 X 5 AA tandem repeats of M-E-T-R-[AG] region. Residues 423–427 (METEV) form a 1-2; approximate repeat. Residues 428–432 (LETRV) form a 1-3; approximate repeat. Residues 433–437 (MERRG) form a 1-4; approximate repeat. A 1-5; approximate repeat occupies 438–442 (METCA). A 1-6 repeat occupies 443-447 (METRG). One copy of the 1-7; approximate repeat lies at 448 to 452 (MEARG). The 1-8; approximate repeat unit spans residues 453–457 (MDARG). The stretch at 458–462 (LEMRG) is one 1-9; approximate repeat. Tandem repeats lie at residues 505–509 (GAGMQ), 510–514 (GTGIQ), 515–519 (GTGMQ), and 520–524 (GAGIQ). The segment at 505 to 549 (GAGMQGTGIQGTGMQGAGIQGGGMQGAGIQGVSIQGGGIQGGGIQ) is 9 X 5 AA tandem repeats of G-[AT]-G-[MI]-Q. One copy of the 2-5; approximate repeat lies at 525–529 (GGGMQ). The 2-6 repeat unit spans residues 530 to 534 (GAGIQ). The 2-7; approximate repeat unit spans residues 535–539 (GVSIQ). The stretch at 540–544 (GGGIQ) is one 2-8; approximate repeat. The tract at residues 542-573 (GIQGGGIQGASKQGGSQPSSFSPGQSQVTPQD) is disordered. The 2-9; approximate repeat unit spans residues 545–549 (GGGIQ). Residues 550-568 (GASKQGGSQPSSFSPGQSQ) are compositionally biased toward low complexity. Phosphoserine is present on serine 563.

It is found in the nucleus. Its function is as follows. May play a significant role in AAUAAA-independent mRNA polyadenylation in germ cells. Directly involved in the binding to pre-mRNAs. This chain is Cleavage stimulation factor subunit 2 tau variant (CSTF2T), found in Homo sapiens (Human).